The primary structure comprises 297 residues: F-box only protein 2 (297 aa).

The disordered stretch occupies residues 1-42 (MDGDGDPESVGQPEEASPEEQQEEACAEEANGGEERPEDDGE). Acidic residues predominate over residues 16–27 (ASPEEQQEEACA). In terms of domain architecture, F-box spans 45–92 (AAYLDELPEPLLLRVLAELPAAQLVQACRLVCLRWKELVDGAPLWLLK). The region spanning 114-297 (FYFLSKRRRN…VTNSSVWVEP (184 aa)) is the FBA domain. A carbohydrate contacts are provided by residues 211-213 (RRD) and 279-280 (YW).

Component of the SCF(FBXO2) complex consisting of CUL1, RBX1, SKP1 and FBXO2. Predominantly detected as heterodimer with SKP1; the heterodimer with SKP1 is not part of the SCF(FBXO2) complex.

The protein resides in the cytoplasm. It is found in the microsome membrane. It participates in protein modification; protein ubiquitination. Functionally, substrate recognition component of a SCF (SKP1-CUL1-F-box protein) E3 ubiquitin-protein ligase complex that mediates the ubiquitination and subsequent proteasomal degradation of target proteins. Involved in the endoplasmic reticulum-associated degradation pathway (ERAD) for misfolded lumenal proteins by recognizing and binding sugar chains on unfolded glycoproteins that are retrotranslocated into the cytosol and promoting their ubiquitination and subsequent degradation. Prevents formation of cytosolic aggregates of unfolded glycoproteins that have been retrotranslocated into the cytosol. Able to recognize and bind denatured glycoproteins, preferentially those of the high-mannose type. The protein is F-box only protein 2 (FBXO2) of Bos taurus (Bovine).